Reading from the N-terminus, the 85-residue chain is ELKNELKQGYKEKLVDIREEIMRKRRAGKLPGDTASVLKAWWQAHSKWPYPTEDDKARLVQETGLQLKQINNWFINQRKRNWHSN.

The ELK domain maps to 1-21; the sequence is ELKNELKQGYKEKLVDIREEI. Positions 22-85 form a DNA-binding region, homeobox; TALE-type; that stretch reads MRKRRAGKLP…NQRKRNWHSN (64 aa).

Belongs to the TALE/KNOX homeobox family. Expressed in all tissues examined. Highest expression in leaves.

The protein localises to the nucleus. The chain is Homeobox protein knotted-1-like 7 (KNOX7) from Zea mays (Maize).